The primary structure comprises 298 residues: uncharacterized protein (298 aa).

Residue Asp119 is part of the active site.

Belongs to the pseudouridine synthase RluA family.

It catalyses the reaction a uridine in RNA = a pseudouridine in RNA. This is an uncharacterized protein from Helicobacter pylori (strain ATCC 700392 / 26695) (Campylobacter pylori).